The sequence spans 187 residues: Flavin prenyltransferase LpdB (187 aa).

FMN contacts are provided by residues G10–S12, S37, S88–T91, and R123. Dimethylallyl phosphate contacts are provided by Y153 and K169.

It belongs to the UbiX/PAD1 family.

It catalyses the reaction dimethylallyl phosphate + FMNH2 = prenylated FMNH2 + phosphate. In terms of biological role, involved in tannin degradation. Flavin prenyltransferase that catalyzes the synthesis of the prenylated FMN cofactor (prenyl-FMN) for gallate decarboxylase LpdC. The prenyltransferase is metal-independent and links a dimethylallyl moiety from dimethylallyl monophosphate (DMAP) to the flavin N5 and C6 atoms of FMN. The chain is Flavin prenyltransferase LpdB from Lactiplantibacillus plantarum (strain ATCC BAA-793 / NCIMB 8826 / WCFS1) (Lactobacillus plantarum).